The sequence spans 290 residues: MLRVVLITGISGSGKSVALRMLEDSGFTCVDNLPLRFLTEFVAVSHDDGMERVAVAIDVRSPGELAELPNVITALRAMGTQLSVVFLDASTETLAQRYSESRRRHPLTDRASRGEKSASLTDCIALERELLAPLRDQEHVIDTTDLTPGQLRSWIRELIDADRAPLVLTFQSFAYKRGVPNDADLVFDVRCLPNPYYDRNLRPLTGRDQPVADWLAGFEIVQRMIDDIDGFIRRWLPQYTLDTRNYLTVAVGCTGGQHRSVYVVEELARRFSEHDPLLVRHRTQLPDESA.

9–16 (GISGSGKS) is an ATP binding site. Residue 58–61 (DVRS) participates in GTP binding.

Belongs to the RapZ-like family.

Its function is as follows. Displays ATPase and GTPase activities. This Bordetella avium (strain 197N) protein is Nucleotide-binding protein BAV3158.